Consider the following 409-residue polypeptide: 2-methylfumaryl-CoA isomerase (409 aa).

Asp165 acts as the Nucleophile in catalysis.

The protein belongs to the CoA-transferase III family. Mesaconyl-CoA isomerase subfamily. In terms of assembly, homodimer.

It catalyses the reaction 2-methylfumaryl-CoA = 3-methylfumaryl-CoA. With respect to regulation, partially inhibited by hydroxylamine. In terms of biological role, involved in the glyoxylate assimilation cycle used to regenerate acetyl-CoA and produce pyruvate as universal precursor for biosynthesis. This reaction involves an intramolecular CoA transferase that catalyzes the reversible transfer of the CoA moiety from the C1-carboxyl group of mesaconyl-CoA to the C4-carboxyl group. It does not require free mesaconate as CoA acceptor. This Chloroflexus aurantiacus (strain ATCC 29366 / DSM 635 / J-10-fl) protein is 2-methylfumaryl-CoA isomerase (mct).